The chain runs to 468 residues: Tyramine receptor tyra-2 (468 aa).

Residues 1-23 (MMSSYVMSPVDETYTLFQILKGS) are Extracellular-facing. Residues 24 to 43 (ALFLLVLWTIFANSLVFIVL) form a helical membrane-spanning segment. The Cytoplasmic segment spans residues 44–54 (YKNPRLQTVPN). The helical transmembrane segment at 55-77 (LLVGNLAFSDLALGLIVLPLSSV) threads the bilayer. The Extracellular segment spans residues 78-91 (YAIAGEWVFPDALC). Cysteines 91 and 177 form a disulfide. A helical transmembrane segment spans residues 92-114 (EVFVSADILCSTASIWNLSIVGL). Residues 115-134 (DRYWAITSPVAYMSKRNKRT) are Cytoplasmic-facing. Residues 135–157 (AGIMILSVWISSALISLAPLLGW) form a helical membrane-spanning segment. Residues 158–186 (KQTAQTPNLIYEKNNTVRQCTFLDLPSYT) lie on the Extracellular side of the membrane. Residue Asn-171 is glycosylated (N-linked (GlcNAc...) asparagine). The chain crosses the membrane as a helical span at residues 187-209 (VYSATGSFFIPTLLMFFVYFKIY). Residues 210 to 387 (QAFAKHRARQ…SAAKERRGVK (178 aa)) lie on the Cytoplasmic side of the membrane. The disordered stretch occupies residues 252-306 (DEFAKEEEEEEDSESSGQVENGLGNGNDAIIEEDECEDEDSDEKRDDHTSMTTVT). Composition is skewed to acidic residues over residues 255-265 (AKEEEEEEDSE) and 281-292 (IIEEDECEDEDS). The chain crosses the membrane as a helical span at residues 388–410 (VLGIILGCFTVCWAPFFTMYVLV). At 411–424 (QFCKDCSPNAHIEM) the chain is on the extracellular side. The chain crosses the membrane as a helical span at residues 425–444 (FITWLGYSNSAMNPIIYTVF). The Cytoplasmic segment spans residues 445–468 (NRDYQIALKRLFTSEKKPSSTSRV).

The protein belongs to the G-protein coupled receptor 1 family. In terms of tissue distribution, expressed in the pharyngeal neurons, MCL/R and NSML/R and the AS group of amphidial sensory neurons, ASEL/R, AGSL/R, ASHL/R and ASIL/R.

The protein localises to the cell membrane. In terms of biological role, G-protein coupled receptor for tyramine, a known neurotransmitter and neuromodulator and direct precursor of octopamine. Expression in amphidial sensory neurons suggests a role in chemosensation. The polypeptide is Tyramine receptor tyra-2 (tyra-2) (Caenorhabditis elegans).